Consider the following 400-residue polypeptide: Large envelope protein (400 aa).

M1 is subject to N-acetylmethionine. Residues 1–20 are disordered; that stretch reads MGGWSAKPRKGMGTNLSVPN. G2 carries the N-myristoyl glycine; by host lipid modification. Positions 2–119 are pre-S1; sequence GGWSAKPRKG…PPLRDSHPQA (118 aa). The pre-S stretch occupies residues 2–174; sequence GGWSAKPRKG…SSRTGDPALN (173 aa). Residues 2 to 181 are Virion surface; in external conformation-facing; it reads GGWSAKPRKG…ALNMENITSG (180 aa). Residues 2–253 lie on the Intravirion; in internal conformation side of the membrane; that stretch reads GGWSAKPRKG…PGYRWMCLRR (252 aa). W4 carries N-linked (GlcNAc...) asparagine glycosylation. Residues 120–174 are pre-S2; that stretch reads MQWNSTAFQQALQDPRVRGLFFPAGGSSSGTVNPAPNIASHISSISSRTGDPALN. The chain crosses the membrane as a helical span at residues 182–202; it reads FLGPLLVLQAGFFLLTRILTI. Topologically, residues 203–253 are intravirion; in external conformation; that stretch reads PQSLDSWWTSLNFLGGSPVCLGQNSQSPTSNHSPTSCPPICPGYRWMCLRR. The chain crosses the membrane as a helical span at residues 254–274; the sequence is FIIFLFILLLCLIFLLVLLDY. Topologically, residues 275-348 are virion surface; that stretch reads QGMLPVCPLI…WASVRFSWLS (74 aa). N320 is a glycosylation site (N-linked (GlcNAc...) asparagine; by host). A helical membrane pass occupies residues 349–369; it reads LLVPFVQWFVGLSPTVWLSVI. Over 370–375 the chain is Intravirion; that stretch reads WMMWYW. The helical transmembrane segment at 376-398 threads the bilayer; that stretch reads GPSLYNILSPFIPLLPIFFCLWV. Over 399-400 the chain is Virion surface; the sequence is YI.

The protein belongs to the orthohepadnavirus major surface antigen family. As to quaternary structure, in its internal form (Li-HBsAg), interacts with the capsid protein and with the isoform S. Interacts with host chaperone CANX. In terms of assembly, associates with host chaperone CANX through its pre-S2 N glycan; this association may be essential for isoform M proper secretion. Interacts with isoform L. Interacts with the antigens of satellite virus HDV (HDVAgs); this interaction is required for encapsidation of HDV genomic RNA. Isoform M is N-terminally acetylated by host at a ratio of 90%, and N-glycosylated by host at the pre-S2 region. In terms of processing, myristoylated.

The protein resides in the virion membrane. In terms of biological role, the large envelope protein exists in two topological conformations, one which is termed 'external' or Le-HBsAg and the other 'internal' or Li-HBsAg. In its external conformation the protein attaches the virus to cell receptors and thereby initiating infection. This interaction determines the species specificity and liver tropism. This attachment induces virion internalization predominantly through caveolin-mediated endocytosis. The large envelope protein also assures fusion between virion membrane and endosomal membrane. In its internal conformation the protein plays a role in virion morphogenesis and mediates the contact with the nucleocapsid like a matrix protein. Functionally, the middle envelope protein plays an important role in the budding of the virion. It is involved in the induction of budding in a nucleocapsid independent way. In this process the majority of envelope proteins bud to form subviral lipoprotein particles of 22 nm of diameter that do not contain a nucleocapsid. This Hepatitis B virus genotype A1 subtype adw2 (isolate Southern-Africa/Cai) (HBV-A) protein is Large envelope protein.